The sequence spans 293 residues: Ribosomal protein L11 methyltransferase (293 aa).

T145, G166, D188, and N230 together coordinate S-adenosyl-L-methionine.

Belongs to the methyltransferase superfamily. PrmA family.

The protein resides in the cytoplasm. The enzyme catalyses L-lysyl-[protein] + 3 S-adenosyl-L-methionine = N(6),N(6),N(6)-trimethyl-L-lysyl-[protein] + 3 S-adenosyl-L-homocysteine + 3 H(+). Its function is as follows. Methylates ribosomal protein L11. This is Ribosomal protein L11 methyltransferase from Shewanella sp. (strain ANA-3).